A 268-amino-acid polypeptide reads, in one-letter code: Tryptophan synthase alpha chain (268 aa).

Active-site proton acceptor residues include glutamate 40 and aspartate 51.

The protein belongs to the TrpA family. Tetramer of two alpha and two beta chains.

The catalysed reaction is (1S,2R)-1-C-(indol-3-yl)glycerol 3-phosphate + L-serine = D-glyceraldehyde 3-phosphate + L-tryptophan + H2O. It functions in the pathway amino-acid biosynthesis; L-tryptophan biosynthesis; L-tryptophan from chorismate: step 5/5. In terms of biological role, the alpha subunit is responsible for the aldol cleavage of indoleglycerol phosphate to indole and glyceraldehyde 3-phosphate. This chain is Tryptophan synthase alpha chain, found in Geobacillus thermodenitrificans (strain NG80-2).